A 320-amino-acid chain; its full sequence is Annexin A5 (320 aa).

An N-acetylalanine modification is found at Ala2. 4 Annexin repeats span residues 15–86 (FDER…ALMK), 87–158 (PSRL…VLLQ), 170–242 (AQVE…AVVK), and 246–317 (SIPA…LLCG). A Glycyl lysine isopeptide (Lys-Gly) (interchain with G-Cter in SUMO1); alternate cross-link involves residue Lys29. Lys29 participates in a covalent cross-link: Glycyl lysine isopeptide (Lys-Gly) (interchain with G-Cter in SUMO2); alternate. The residue at position 37 (Ser37) is a Phosphoserine. An N6-acetyllysine mark is found at Lys70, Lys76, Lys79, Lys97, and Lys101. Lys290 carries the post-translational modification N6-succinyllysine. The [IL]-x-C-x-x-[DE] motif signature appears at 314–320 (LLCGGED).

Belongs to the annexin family. In terms of assembly, monomer. Binds ATRX and EIF5B. Post-translationally, S-nitrosylation is induced by interferon-gamma and oxidatively-modified low-densitity lipoprotein (LDL(ox)) possibly implicating the iNOS-S100A8/9 transnitrosylase complex.

In terms of biological role, this protein is an anticoagulant protein that acts as an indirect inhibitor of the thromboplastin-specific complex, which is involved in the blood coagulation cascade. The sequence is that of Annexin A5 (ANXA5) from Macaca fascicularis (Crab-eating macaque).